A 580-amino-acid polypeptide reads, in one-letter code: MITRLSELFVRTLRDDPADAEVPSHKLLIRAGYVRPVAPGVYSWLPLGLRVLRKIENIVREEMNAIGGQEILLPALLPRAPYETTNRWTEYGDSLFRLKDRRDNDMMLGPTHEELFALTVKGEYSSYKDFPVILYQVQTKYRDEARPRAGILRGREFVMKDSYSFDTSDDGLKAAYHAHRDAYQRIFGRLGLDYVIVAATSGAMGGSASEEFLAESPTGEDTFVRCVESGYAANVEAVITPAPPARPIEGLAEAVVHETGDTPTIATLVDWANSAGLGRTVTAADTLKNILLKVRQPGGDWELLAVGVPGDREVDDKRLGAALEPAEYELLGDADFAKYPFLVRGYIGPKALLANGVRYLVDPRVVEGTSWITGADEPGKHVVDLVAGRDFTADGTIEAAEVRDGDPSPDGAGQLVSARGIEIGHIFQLGRKYTDAFTVDVLGENGKPVRLTQGSYGIGVSRLVAVVAEQQHDELGLRWPSAVSPFDVHVVIANKDDAARAGAEELAAELDRLGHEVLLDDRTASPGVKFKDAELLGVPWIVVIGRGWADGTIELRNRFTGETQPIAVTDAVASVTQAIG.

Belongs to the class-II aminoacyl-tRNA synthetase family. ProS type 1 subfamily. As to quaternary structure, homodimer.

Its subcellular location is the cytoplasm. It catalyses the reaction tRNA(Pro) + L-proline + ATP = L-prolyl-tRNA(Pro) + AMP + diphosphate. Catalyzes the attachment of proline to tRNA(Pro) in a two-step reaction: proline is first activated by ATP to form Pro-AMP and then transferred to the acceptor end of tRNA(Pro). As ProRS can inadvertently accommodate and process non-cognate amino acids such as alanine and cysteine, to avoid such errors it has two additional distinct editing activities against alanine. One activity is designated as 'pretransfer' editing and involves the tRNA(Pro)-independent hydrolysis of activated Ala-AMP. The other activity is designated 'posttransfer' editing and involves deacylation of mischarged Ala-tRNA(Pro). The misacylated Cys-tRNA(Pro) is not edited by ProRS. The polypeptide is Proline--tRNA ligase (Mycobacteroides abscessus (strain ATCC 19977 / DSM 44196 / CCUG 20993 / CIP 104536 / JCM 13569 / NCTC 13031 / TMC 1543 / L948) (Mycobacterium abscessus)).